A 220-amino-acid chain; its full sequence is Iron-sulfur cluster repair protein YtfE (220 aa).

This sequence belongs to the RIC family. YtfE subfamily. Homodimer.

It is found in the cytoplasm. In terms of biological role, di-iron-containing protein involved in the repair of iron-sulfur clusters damaged by oxidative and nitrosative stress conditions. This is Iron-sulfur cluster repair protein YtfE from Salmonella schwarzengrund (strain CVM19633).